The chain runs to 74 residues: Small ribosomal subunit protein bS18 (74 aa).

Belongs to the bacterial ribosomal protein bS18 family. In terms of assembly, part of the 30S ribosomal subunit. Forms a tight heterodimer with protein bS6.

In terms of biological role, binds as a heterodimer with protein bS6 to the central domain of the 16S rRNA, where it helps stabilize the platform of the 30S subunit. The polypeptide is Small ribosomal subunit protein bS18 (Alkalilimnicola ehrlichii (strain ATCC BAA-1101 / DSM 17681 / MLHE-1)).